Reading from the N-terminus, the 240-residue chain is Ribonuclease P protein component (240 aa).

The segment at 1 to 140 (MDEKDLATQQ…KKAGGKGLVS (140 aa)) is disordered. Over residues 40–51 (APPPHRVIPPHP) the composition is skewed to pro residues. The insert stretch occupies residues 47–123 (IPPHPGLRQD…PGPDRDGGSK (77 aa)). Positions 122–132 (SKASRASSPKK) are enriched in low complexity.

This sequence belongs to the RnpA family. Consists of a catalytic RNA component (M1 or rnpB) and a protein subunit.

It carries out the reaction Endonucleolytic cleavage of RNA, removing 5'-extranucleotides from tRNA precursor.. Functionally, RNaseP catalyzes the removal of the 5'-leader sequence from pre-tRNA to produce the mature 5'-terminus. It can also cleave other RNA substrates such as 4.5S RNA. The protein component plays an auxiliary but essential role in vivo by binding to the 5'-leader sequence and broadening the substrate specificity of the ribozyme. The chain is Ribonuclease P protein component from Thermus filiformis.